The chain runs to 632 residues: DNA topoisomerase 4 subunit B (632 aa).

Residues Tyr5, Asn42, Asp69, 110–116, and Lys334 each bind ATP; that span reads GLHGVGI. Positions 412 to 525 constitute a Toprim domain; that stretch reads TELFLVEGDS…DGHVYVAMPP (114 aa). Mg(2+) contacts are provided by Glu418, Asp490, and Asp492.

The protein belongs to the type II topoisomerase family. ParE type 1 subfamily. In terms of assembly, heterotetramer composed of ParC and ParE. Requires Mg(2+) as cofactor. Mn(2+) is required as a cofactor. It depends on Ca(2+) as a cofactor.

It carries out the reaction ATP-dependent breakage, passage and rejoining of double-stranded DNA.. Its function is as follows. Topoisomerase IV is essential for chromosome segregation. It relaxes supercoiled DNA. Performs the decatenation events required during the replication of a circular DNA molecule. In Haemophilus influenzae (strain ATCC 51907 / DSM 11121 / KW20 / Rd), this protein is DNA topoisomerase 4 subunit B.